Here is a 214-residue protein sequence, read N- to C-terminus: Peroxiredoxin-5, mitochondrial (214 aa).

The N-terminal 52 residues, 1 to 52, are a transit peptide targeting the mitochondrion; the sequence is MGLAGVCALRRSAGYILVGGAGGQSAAAAARRYSEGEWASGGVRSFSRAAAA. The Thioredoxin domain maps to 56–214; that stretch reads IKVGDAIPAV…SLAPNIISQL (159 aa). Lys75 bears the N6-acetyllysine mark. The residue at position 83 (Lys83) is an N6-acetyllysine; alternate. The residue at position 83 (Lys83) is an N6-succinyllysine; alternate. Cys100 functions as the Cysteine sulfenic acid (-SOH) intermediate in the catalytic mechanism. Cys100 carries S-palmitoyl cysteine lipidation. A disulfide bridge connects residues Cys100 and Cys204. N6-succinyllysine is present on Lys116. Phosphoserine is present on residues Ser171 and Ser182. Positions 212–214 match the Microbody targeting signal motif; that stretch reads SQL.

It belongs to the peroxiredoxin family. Prx5 subfamily. In terms of assembly, monomer. S-palmitoylated. Palmitoylation occurs on the active site, inhibiting its reactivity; therefore PRDX5 palmitoylation status determines its antioxidant capacity. In terms of processing, S-palmitoylated. Depalmitoylated by ABHD10. In terms of tissue distribution, widely expressed.

Its subcellular location is the mitochondrion. The protein resides in the cytoplasm. It localises to the peroxisome matrix. It catalyses the reaction a hydroperoxide + [thioredoxin]-dithiol = an alcohol + [thioredoxin]-disulfide + H2O. Thiol-specific peroxidase that catalyzes the reduction of hydrogen peroxide and organic hydroperoxides to water and alcohols, respectively. Plays a role in cell protection against oxidative stress by detoxifying peroxides and as sensor of hydrogen peroxide-mediated signaling events. This Homo sapiens (Human) protein is Peroxiredoxin-5, mitochondrial.